We begin with the raw amino-acid sequence, 214 residues long: Adenylate kinase (214 aa).

G10–T15 is an ATP binding site. The NMP stretch occupies residues S30–V59. AMP contacts are provided by residues T31, R36, A57 to V59, G85 to R88, and Q92. The tract at residues G126–D163 is LID. R127 provides a ligand contact to ATP. Residues C130 and C133 each contribute to the Zn(2+) site. T136–Y137 lines the ATP pocket. The Zn(2+) site is built by C150 and C153. AMP-binding residues include R160 and R171. K199 provides a ligand contact to ATP.

Belongs to the adenylate kinase family. Monomer.

Its subcellular location is the cytoplasm. It carries out the reaction AMP + ATP = 2 ADP. It participates in purine metabolism; AMP biosynthesis via salvage pathway; AMP from ADP: step 1/1. Catalyzes the reversible transfer of the terminal phosphate group between ATP and AMP. Plays an important role in cellular energy homeostasis and in adenine nucleotide metabolism. The sequence is that of Adenylate kinase from Agathobacter rectalis (strain ATCC 33656 / DSM 3377 / JCM 17463 / KCTC 5835 / VPI 0990) (Eubacterium rectale).